The chain runs to 334 residues: tRNA-cytidine(32) 2-sulfurtransferase (334 aa).

The PP-loop motif signature appears at 74–79 (SGGKDS). [4Fe-4S] cluster is bound by residues Cys149, Cys152, and Cys240.

This sequence belongs to the TtcA family. Homodimer. The cofactor is Mg(2+). It depends on [4Fe-4S] cluster as a cofactor.

It is found in the cytoplasm. The enzyme catalyses cytidine(32) in tRNA + S-sulfanyl-L-cysteinyl-[cysteine desulfurase] + AH2 + ATP = 2-thiocytidine(32) in tRNA + L-cysteinyl-[cysteine desulfurase] + A + AMP + diphosphate + H(+). It functions in the pathway tRNA modification. Functionally, catalyzes the ATP-dependent 2-thiolation of cytidine in position 32 of tRNA, to form 2-thiocytidine (s(2)C32). The sulfur atoms are provided by the cysteine/cysteine desulfurase (IscS) system. The protein is tRNA-cytidine(32) 2-sulfurtransferase of Burkholderia ambifaria (strain ATCC BAA-244 / DSM 16087 / CCUG 44356 / LMG 19182 / AMMD) (Burkholderia cepacia (strain AMMD)).